The chain runs to 275 residues: Myb/SANT-like DNA-binding domain-containing protein 3 (275 aa).

A Myb-like domain is found at 13 to 78 (FSELEKSILL…QLKKCWENIK (66 aa)). A phosphoserine mark is found at S96 and S98. K154 participates in a covalent cross-link: Glycyl lysine isopeptide (Lys-Gly) (interchain with G-Cter in SUMO2). Positions 211–247 (QLIQMNEVHVAKIQQIERECEMAEEEHRIKMEVLNKK) form a coiled coil. Position 274 is a phosphoserine (S274).

It belongs to the MSANTD3 family.

This Bos taurus (Bovine) protein is Myb/SANT-like DNA-binding domain-containing protein 3 (MSANTD3).